The primary structure comprises 130 residues: Small ribosomal subunit protein uS8 (130 aa).

This sequence belongs to the universal ribosomal protein uS8 family. As to quaternary structure, part of the 30S ribosomal subunit. Contacts proteins S5 and S12.

Functionally, one of the primary rRNA binding proteins, it binds directly to 16S rRNA central domain where it helps coordinate assembly of the platform of the 30S subunit. In Histophilus somni (strain 129Pt) (Haemophilus somnus), this protein is Small ribosomal subunit protein uS8.